The sequence spans 115 residues: NADH-ubiquinone oxidoreductase chain 3 (115 aa).

Helical transmembrane passes span 4 to 24 (LMAL…AFWL), 55 to 75 (FFLV…LLPL), and 84 to 104 (INIM…GLAY).

The protein belongs to the complex I subunit 3 family. Core subunit of respiratory chain NADH dehydrogenase (Complex I) which is composed of 45 different subunits. Interacts with TMEM186. Interacts with TMEM242.

It localises to the mitochondrion inner membrane. It catalyses the reaction a ubiquinone + NADH + 5 H(+)(in) = a ubiquinol + NAD(+) + 4 H(+)(out). Core subunit of the mitochondrial membrane respiratory chain NADH dehydrogenase (Complex I) which catalyzes electron transfer from NADH through the respiratory chain, using ubiquinone as an electron acceptor. Essential for the catalytic activity of complex I. The protein is NADH-ubiquinone oxidoreductase chain 3 of Peromyscus melanotis (Black-eared mouse).